Consider the following 415-residue polypeptide: Carboxypeptidase B (415 aa).

A signal peptide spans 1–13 (MLLLLALVSVALA). The propeptide at 14 to 108 (HASEEHFDGN…LESQFDSHTR (95 aa)) is activation peptide. The 295-residue stretch at 116–410 (KYNKWETIEA…LAVKYIANYV (295 aa)) folds into the Peptidase M14 domain. Residues Cys171 and Cys184 are joined by a disulfide bond. Zn(2+) contacts are provided by His174 and Glu177. Residues 174–177 (HARE), Arg232, and 249–250 (NR) contribute to the substrate site. 2 disulfides stabilise this stretch: Cys243-Cys266 and Cys257-Cys271. Position 302 (His302) interacts with Zn(2+). Residues 303 to 304 (SY) and Tyr354 contribute to the substrate site. The Proton donor/acceptor role is filled by Glu376.

It belongs to the peptidase M14 family. Requires Zn(2+) as cofactor.

It localises to the secreted. The protein resides in the zymogen granule lumen. The enzyme catalyses Preferential release of a C-terminal lysine or arginine amino acid.. The polypeptide is Carboxypeptidase B (Cpb1) (Rattus norvegicus (Rat)).